The sequence spans 220 residues: Catechol O-methyltransferase (220 aa).

Residues V44, E66, 68-69 (GT), S74, E92, and A121 contribute to the S-adenosyl-L-methionine site. Position 139 (D139) interacts with a divalent metal cation. S-adenosyl-L-methionine is bound at residue D141. D165 and N166 together coordinate a divalent metal cation.

The protein belongs to the class I-like SAM-binding methyltransferase superfamily. Cation-dependent O-methyltransferase family. Homodimer. A divalent metal cation is required as a cofactor.

It carries out the reaction a catechol + S-adenosyl-L-methionine = a guaiacol + S-adenosyl-L-homocysteine + H(+). Inhibited by EDTA. Functionally, catechol O-methyltransferase that can use various catechol-like compounds such as gallic acid (GA), 3,4-dihydroxy-5-methoxy-benzoic acid (5OMeBA), protocatechuic acid (PCA), 3,4-dihydroxy-benzaldehyde (DHA), dopamine, caffeic acid (CA), luteolin, quercetin, and 5-hydroxyuridine. The polypeptide is Catechol O-methyltransferase (Mycobacterium tuberculosis (strain ATCC 25618 / H37Rv)).